A 268-amino-acid chain; its full sequence is Tetraspanin-5 (268 aa).

The Cytoplasmic portion of the chain corresponds to 1-17; it reads MSGKHYKGPEVSCCIKY. The chain crosses the membrane as a helical span at residues 18 to 38; that stretch reads FIFGFNVIFWFLGIAFLGIGL. Residues 39 to 61 lie on the Extracellular side of the membrane; that stretch reads WAWNEKGVLSNISSITDLGGFDP. Residue Asn49 is glycosylated (N-linked (GlcNAc...) asparagine). Residues 62–82 form a helical membrane-spanning segment; it reads VWLFLVVGGVMFILGFAGCIG. Topologically, residues 83–92 are cytoplasmic; the sequence is ALRENTFLLK. A helical transmembrane segment spans residues 93–113; that stretch reads FFSVFLGIIFFLELTAGVLAF. Residues 114–232 are Extracellular-facing; it reads VFKDWIKDQL…PQFEKWLQDN (119 aa). Cystine bridges form between Cys153–Cys221, Cys154–Cys186, Cys170–Cys180, and Cys187–Cys200. Residues Asn169 and Asn174 are each glycosylated (N-linked (GlcNAc...) asparagine). Asn232 carries N-linked (GlcNAc...) asparagine glycosylation. Residues 233-253 form a helical membrane-spanning segment; sequence LTIVAGIFIGIALLQIFGICL. Topologically, residues 254 to 268 are cytoplasmic; it reads AQNLVSDIEAVRASW.

It belongs to the tetraspanin (TM4SF) family. In terms of assembly, interacts with ADAM10; the interaction influences ADAM10 substrate specificity, endocytosis and turnover. Palmitoylated.

It localises to the cell membrane. Part of TspanC8 subgroup, composed of 6 members that interact with the transmembrane metalloprotease ADAM10. This interaction is required for ADAM10 exit from the endoplasmic reticulum and for enzymatic maturation and trafficking to the cell surface as well as substrate specificity. Different TspanC8/ADAM10 complexes have distinct substrates. Promotes ADAM10-mediated cleavage of CD44. Seems to regulate VE-cadherin expression in endothelial cells probably through interaction with ADAM10, promoting leukocyte transmigration. This chain is Tetraspanin-5 (TSPAN5), found in Bos taurus (Bovine).